Consider the following 492-residue polypeptide: Bifunctional shikimate kinase/3-dehydroquinate synthase (492 aa).

The segment at M1–D161 is shikimate kinase. Residue G10–T15 participates in ATP binding. Residue S14 participates in Mg(2+) binding. Substrate contacts are provided by D32, R56, and G78. R114 is an ATP binding site. R131 lines the substrate pocket. Residues E162–D492 are 3-dehydroquinate synthase.

The protein in the N-terminal section; belongs to the shikimate kinase family. In the C-terminal section; belongs to the sugar phosphate cyclases superfamily. Dehydroquinate synthase family. Requires Mg(2+) as cofactor. NAD(+) serves as cofactor. It depends on a divalent metal cation as a cofactor.

The protein localises to the cytoplasm. The enzyme catalyses 7-phospho-2-dehydro-3-deoxy-D-arabino-heptonate = 3-dehydroquinate + phosphate. It carries out the reaction shikimate + ATP = 3-phosphoshikimate + ADP + H(+). The protein operates within metabolic intermediate biosynthesis; chorismate biosynthesis; chorismate from D-erythrose 4-phosphate and phosphoenolpyruvate: step 2/7. Its pathway is metabolic intermediate biosynthesis; chorismate biosynthesis; chorismate from D-erythrose 4-phosphate and phosphoenolpyruvate: step 5/7. Catalyzes the specific phosphorylation of the 3-hydroxyl group of shikimic acid using ATP as a cosubstrate. In Thermotoga maritima (strain ATCC 43589 / DSM 3109 / JCM 10099 / NBRC 100826 / MSB8), this protein is Bifunctional shikimate kinase/3-dehydroquinate synthase (aroKB).